The primary structure comprises 383 residues: Putative glutamate--cysteine ligase 2-2 (383 aa).

The protein belongs to the glutamate--cysteine ligase type 2 family. YbdK subfamily.

The catalysed reaction is L-cysteine + L-glutamate + ATP = gamma-L-glutamyl-L-cysteine + ADP + phosphate + H(+). In terms of biological role, ATP-dependent carboxylate-amine ligase which exhibits weak glutamate--cysteine ligase activity. The protein is Putative glutamate--cysteine ligase 2-2 of Paenarthrobacter aurescens (strain TC1).